The sequence spans 303 residues: Protein bottleneck (303 aa).

Disordered stretches follow at residues 102-142 and 185-272; these read SKRN…PTVT and VATT…ASVR. Composition is skewed to low complexity over residues 115-138 and 185-197; these read RQQE…QQQE and VATT…TANS. Positions 260–272 are enriched in polar residues; that stretch reads ATISRQSSSASVR.

In terms of tissue distribution, restricted to the blastoderm.

The protein localises to the cytoplasm. It localises to the cytoskeleton. Its function is as follows. Acts as a regulator of the microfilament network governing cellularization of the embryo. Determines the timing of a key conformational transition in the cortical microfilament network: the proper coordination of membrane invagination and basal closure of the cells. To do this, bnk possibly physically links neighboring contractile units of the early cycle 14 microfilament network in a manner that prevents basal constriction until the proper stage has been reached. Bnk together with nullo and Sry-alpha may provide auxiliary functions, by acting both to stabilize a large and dynamic microfilament structure and regulate its functions. The polypeptide is Protein bottleneck (bnk) (Drosophila melanogaster (Fruit fly)).